A 409-amino-acid chain; its full sequence is Endoglucanase B (409 aa).

Substrate contacts are provided by residues H61, 65 to 66, Y92, and H127; that span reads WY. The active-site Proton donor is the E165. Y228 contacts substrate. E254 (nucleophile) is an active-site residue. Residues 260–261, W288, and 293–295 each bind substrate; these read AT and KDE. Residues 326–372 are disordered; sequence IRESATTPPSDPTPPSDPDPGEPEPDPGEPDPTPPSDPGDYPAWDPN. Positions 334–343 are enriched in pro residues; sequence PSDPTPPSDP. Acidic residues predominate over residues 344–354; it reads DPGEPEPDPGE.

The protein belongs to the glycosyl hydrolase 5 (cellulase A) family.

It carries out the reaction Endohydrolysis of (1-&gt;4)-beta-D-glucosidic linkages in cellulose, lichenin and cereal beta-D-glucans.. The chain is Endoglucanase B (celB) from Evansella cellulosilytica (strain ATCC 21833 / DSM 2522 / FERM P-1141 / JCM 9156 / N-4) (Bacillus cellulosilyticus).